Reading from the N-terminus, the 549-residue chain is MKRVLTALAATLPFAANAADAISGAVERQPTNWQAIIMFLIFVVFTLGITYWASKRVRSRSDYYTAGGNITGFQNGLAIAGDYMSAASFLGISALVFTSGYDGLIYSLGFLVGWPIILFLIAERLRNLGRYTFADVASYRLKQGPIRILSACGSLVVVALYLIAQMVGAGKLIELLFGLNYHIAVVLVGVLMMMYVLFGGMLATTWVQIIKAVLLLFGASFMAFMVMKHVGFSFNNLFSEAMAVHPKGVDIMKPGGLVKDPISALSLGLGLMFGTAGLPHILMRFFTVSDAREARKSVFYATGFMGYFYILTFIIGFGAIMLVGANPEYKDAAGHLIGGNNMAAVHLANAVGGNLFLGFISAVAFATILAVVAGLTLAGASAVSHDLYANVFKKGATEREELRVSKITVLILGVIAIILGVLFENQNIAFMVGLAFAIAASCNFPIILLSMYWSKLTTRGAMMGGWLGLITAVVLMILGPTIWVQILGHEKAIFPYEYPALFSITVAFLGIWFFSATDNSAEGARERELFRAQFIRSQTGFGVEQGRAH.

Helical transmembrane passes span 33–53, 77–97, 103–123, 148–168, 183–203, 206–226, 262–282, 303–323, 355–375, 404–424, 428–448, 464–484, and 493–513; these read WQAI…TYWA, LAIA…ALVF, GLIY…LIAE, ILSA…QMVG, IAVV…GMLA, WVQI…AFMV, ISAL…PHIL, GFMG…IMLV, LFLG…VAGL, VSKI…VLFE, IAFM…PIIL, GGWL…TIWV, and IFPY…GIWF.

The protein belongs to the sodium:solute symporter (SSF) (TC 2.A.21) family.

The protein resides in the cell inner membrane. Its function is as follows. Transports acetate. This is Cation/acetate symporter ActP from Escherichia coli (strain ATCC 8739 / DSM 1576 / NBRC 3972 / NCIMB 8545 / WDCM 00012 / Crooks).